The following is a 312-amino-acid chain: D-alanine--D-alanine ligase (312 aa).

The ATP-grasp domain occupies 108-308 (KLVWQQTGIP…YSELVVKVLS (201 aa)). ATP is bound at residue 138–193 (VAKLGVPLFVKPASEGSSVAVEKVKSADALPAALEEAAKHDKIVIVEKSIEGGGEY). Residues Asp-262, Glu-275, and Asn-277 each contribute to the Mg(2+) site.

This sequence belongs to the D-alanine--D-alanine ligase family. Mg(2+) is required as a cofactor. The cofactor is Mn(2+).

The protein resides in the cytoplasm. The enzyme catalyses 2 D-alanine + ATP = D-alanyl-D-alanine + ADP + phosphate + H(+). It participates in cell wall biogenesis; peptidoglycan biosynthesis. In terms of biological role, cell wall formation. The polypeptide is D-alanine--D-alanine ligase (Burkholderia mallei (strain NCTC 10247)).